Reading from the N-terminus, the 157-residue chain is uncharacterized protein (157 aa).

One can recognise an HD domain in the interval 33 to 134; sequence NLKHFLDVAR…MYRADKLSRL (102 aa).

This is an uncharacterized protein from Clostridium beijerinckii (strain ATCC 51743 / NCIMB 8052) (Clostridium acetobutylicum).